The chain runs to 87 residues: uncharacterized protein (87 aa).

An N-terminal signal peptide occupies residues 1 to 26; sequence MMSTQHFILSLTILIIISNLHDEVNA. 3 disulfide bridges follow: C61–C75, C68–C79, and C74–C84.

The protein resides in the secreted. This is an uncharacterized protein from Schistosoma japonicum (Blood fluke).